The chain runs to 406 residues: Peptidase T (406 aa).

Histidine 78 is a binding site for Zn(2+). Aspartate 80 is an active-site residue. Aspartate 139 serves as a coordination point for Zn(2+). The active-site Proton acceptor is the glutamate 173. Residues glutamate 174, aspartate 196, and histidine 378 each coordinate Zn(2+).

Belongs to the peptidase M20B family. Requires Zn(2+) as cofactor.

It localises to the cytoplasm. It catalyses the reaction Release of the N-terminal residue from a tripeptide.. In terms of biological role, cleaves the N-terminal amino acid of tripeptides. The protein is Peptidase T of Clostridium perfringens (strain SM101 / Type A).